A 113-amino-acid polypeptide reads, in one-letter code: Integration host factor subunit alpha (113 aa).

Residues 87–113 are disordered; it reads NALNGEVSDETTEGADDDDDEEGEGDE. The span at 93 to 113 shows a compositional bias: acidic residues; the sequence is VSDETTEGADDDDDEEGEGDE.

It belongs to the bacterial histone-like protein family. Heterodimer of an alpha and a beta chain.

In terms of biological role, this protein is one of the two subunits of integration host factor, a specific DNA-binding protein that functions in genetic recombination as well as in transcriptional and translational control. In Anaeromyxobacter dehalogenans (strain 2CP-1 / ATCC BAA-258), this protein is Integration host factor subunit alpha.